The primary structure comprises 238 residues: CD63 antigen (238 aa).

The Cytoplasmic segment spans residues 1–11 (MAVEGGMKCVK). The helical transmembrane segment at 12–32 (FLLYVLLLAFCACAVGLIAIG) threads the bilayer. At 33 to 51 (VAVQVVLKQAITHETTAGS) the chain is on the extracellular side. Residues 52–72 (LLPVVIIAVGAFLFLVAFVGC) form a helical membrane-spanning segment. The Cytoplasmic portion of the chain corresponds to 73–81 (CGACKENYC). Residues 82–102 (LMITFAIFLSLIMLVEVAVAI) form a helical membrane-spanning segment. Topologically, residues 103–203 (AGYVFRDQVK…TIAIWLRKNI (101 aa)) are extracellular. 4 N-linked (GlcNAc...) asparagine glycosylation sites follow: N116, N130, N150, and N172. A helical transmembrane segment spans residues 204 to 224 (LLVAAAALGIAFVEVLGIIFS). Residues 225 to 238 (CCLVKSIRSGYEVM) are Cytoplasmic-facing. The short motif at 234–238 (GYEVM) is the Lysosomal targeting motif element.

The protein belongs to the tetraspanin (TM4SF) family. In terms of assembly, interacts with TIMP1 and ITGB1 and recruits TIMP1 to ITGB1. Interacts with CD9. Identified in a complex with CD9 and ITGB3. Interacts with PMEL. Interacts with KDR/VEGFR2; identified in a complex with ITGB1 and KDR/VEGFR2 and is required to recruit KDR to ITGB1 complexes. Interacts with SYT7. In terms of processing, palmitoylated at a low, basal level in unstimulated platelets. The level of palmitoylation increases when platelets are activated by thrombin (in vitro). As to expression, ubiquitous. Strongly expressed in kidney. Detected in spleen, bone marrow, peripheral blood mononuclear cells and macrophages.

It localises to the cell membrane. The protein resides in the lysosome membrane. It is found in the late endosome membrane. Its subcellular location is the endosome. The protein localises to the multivesicular body. It localises to the melanosome. The protein resides in the secreted. It is found in the extracellular exosome. Its subcellular location is the cell surface. Functionally, functions as a cell surface receptor for TIMP1 and plays a role in the activation of cellular signaling cascades. Plays a role in the activation of ITGB1 and integrin signaling, leading to the activation of AKT, FAK/PTK2 and MAP kinases. Promotes cell survival, reorganization of the actin cytoskeleton, cell adhesion, spreading and migration, via its role in the activation of AKT and FAK/PTK2. Plays a role in VEGFA signaling via its role in regulating the internalization of KDR/VEGFR2. Plays a role in intracellular vesicular transport processes, and is required for normal trafficking of the PMEL luminal domain that is essential for the development and maturation of melanocytes. Plays a role in the adhesion of leukocytes onto endothelial cells via its role in the regulation of SELP trafficking. May play a role in mast cell degranulation in response to Ms4a2/FceRI stimulation, but not in mast cell degranulation in response to other stimuli. This chain is CD63 antigen (Cd63), found in Mus musculus (Mouse).